A 99-amino-acid polypeptide reads, in one-letter code: Large ribosomal subunit protein bL27 (99 aa).

Residues 1-9 (MLLMNLQLF) constitute a propeptide that is removed on maturation.

It belongs to the bacterial ribosomal protein bL27 family. Post-translationally, the N-terminus is cleaved by ribosomal processing cysteine protease Prp.

The chain is Large ribosomal subunit protein bL27 from Clostridium novyi (strain NT).